The following is a 216-amino-acid chain: Adenylate kinase (216 aa).

10–15 serves as a coordination point for ATP; sequence GAGKGT. The segment at 30–59 is NMP; it reads STGDIFRKNISEKTPLGVKAKEYMDKGQLV. Residues Thr31, Arg36, 57–59, 85–88, and Gln92 each bind AMP; these read QLV and GFPR. The tract at residues 126 to 163 is LID; the sequence is GRRVCPSCGASYHIKFNPPKIEGLCDVCKKEVIQRKDD. Arg127 is an ATP binding site. Cys130 and Cys133 together coordinate Zn(2+). 136 to 137 is an ATP binding site; sequence SY. Zn(2+) contacts are provided by Cys150 and Cys153. Positions 160 and 171 each coordinate AMP. Residue Gln199 participates in ATP binding.

The protein belongs to the adenylate kinase family. As to quaternary structure, monomer.

The protein resides in the cytoplasm. It carries out the reaction AMP + ATP = 2 ADP. The protein operates within purine metabolism; AMP biosynthesis via salvage pathway; AMP from ADP: step 1/1. Its function is as follows. Catalyzes the reversible transfer of the terminal phosphate group between ATP and AMP. Plays an important role in cellular energy homeostasis and in adenine nucleotide metabolism. The polypeptide is Adenylate kinase (Clostridium novyi (strain NT)).